The sequence spans 129 residues: Glycine cleavage system H protein 2 (129 aa).

Residues serine 24 to lysine 105 form the Lipoyl-binding domain. Residue lysine 65 is modified to N6-lipoyllysine.

This sequence belongs to the GcvH family. In terms of assembly, the glycine cleavage system is composed of four proteins: P, T, L and H. Requires (R)-lipoate as cofactor.

In terms of biological role, the glycine cleavage system catalyzes the degradation of glycine. The H protein shuttles the methylamine group of glycine from the P protein to the T protein. This chain is Glycine cleavage system H protein 2, found in Pseudomonas aeruginosa (strain ATCC 15692 / DSM 22644 / CIP 104116 / JCM 14847 / LMG 12228 / 1C / PRS 101 / PAO1).